A 999-amino-acid chain; its full sequence is MKCLKTLLVSTTLLTAFSLNAEVTLEQQVKITEEGLHFDGRNLDFSNVGTPDTGEKYDYFFGPNISAHGDAVKTYRHYVFMTWYKGGKNERNVMLSRYNTLNGELSTIEFPHKHTGFRGDPLVGESHNTIGLSVSPINGTIHMVFDMHAYDNNNHGGKFKDDFFRYSFSVAGAAELPHSEFTLDKFVKDTSEVSQGDDDYKHLTMTGDLDDKGNFARLTYPKFFTTVDGTLLLYMRLGGNNNGAYVFNRYDAETESWSTFTKFNENNQKLKGNQYNWGLYGNMKYVNGKLRVGFQQRSNDNSDKYKYQNGVYYAYSDHPDGFGDWKNHKGEPMTWPLINSDEIKVFEPGDYISHTEANSVYIVGSFDWTVTEKGDIHIISKVRSTDRGRADYEEVYIHSYKPAGAEEFIISTDFPGASEIYTSGDNVYIVGLEGGRPYVEKAQGGTNNFIRVYEASDGPVFDHGTLYIKDGKVYYYLMERTSGTAMPLYLQIIDLDLESDANAPIVSFPSPSVTVNQGYEKLSLNISAESPVEGRSIQSVSLYIDDELVRTDDSLPFLFGHGSKPHETGALGWLDRHEPNPSPLSAGRHVFKAVAVDSEGDSSTATMILNVNSNAPIVSFPQESLEVDEGFERLSLNISAESAVEGRTIESVSLYIDGGLVRTDTSLPYLFGHASKPHETGAMGWLDTHSPNPSPLAAGSYEFTAVATDNEGEETTASMLLVVKGEPEPPIVTWPNSTVTVYEGYEKLAITIDAETPVEGRDIQSVTLFRNGELVRVDTRPVWNFGHSFAPYEFGAMGWLDRHEPNPSPLGVGTHTFTAVARDSAGLESETDMALIVLSLPGPSVMINEGDISLLTEYQNLAITAEASAADDDISLVSLALYIDEQLIREIYEPPFIWGSDAYSTELLSLTEGTHLVRVVATDSNNKQSESSIFINIDLLGDLNKDSIVDKADTRLFTSKLRAGEIMDIRYDFNGDGVVNNRDTRGLVRRCTYSRCSSN.

The signal sequence occupies residues 1 to 21 (MKCLKTLLVSTTLLTAFSLNA). Residue 126–127 (SH) coordinates substrate. The active-site Proton donor/acceptor is His-127. Residues Asp-189, Asp-199, and Lys-201 each coordinate Ca(2+). Substrate is bound by residues Tyr-280 and Arg-297. 3 residues coordinate Ca(2+): Asp-300, Asp-303, and Tyr-305. Tyr-361 contacts substrate.

It belongs to the polysaccharide lyase 24 family.

Its function is as follows. Ulvan lyase involved in ulvan degradation. Ulvan is the main polysaccharide component of the Ulvales (green seaweed) cell wall. It is composed of disaccharide building blocks comprising 3-sulfated rhamnose (Rha3S) linked to D-glucuronic acid (GlcA), L-iduronic acid (IduA), or D-xylose (Xyl). Ulvan lyase catalyzes preferentially the endolytic cleavage of the glycosidic bond between Rha3S and the uronic acid GlcA, but not IduA, producing oligosaccharides that have unsaturated 4-deoxy-L-threo-hex-4-enopyranosiduronic acid (deltaUA) at the non-reducing end. The most abundant end products in the degradation of the ulvan polysaccharide were deltaUA-Rha3S disaccharides and deltaUA-Rha3S-IduA-Rha3S and deltaUA-Rha3S-Xyl-Rha3S tetrasaccharides. This is Ulvan lyase, long isoform from Alteromonas sp. (strain LOR).